The following is a 378-amino-acid chain: Erythronate-4-phosphate dehydrogenase (378 aa).

Substrate-binding residues include Ser45 and Thr66. Asp146 and Thr175 together coordinate NAD(+). Residue Arg208 is part of the active site. Asp232 contributes to the NAD(+) binding site. Glu237 is an active-site residue. The Proton donor role is filled by His254. NAD(+) is bound at residue Gly257. Tyr258 is a substrate binding site.

This sequence belongs to the D-isomer specific 2-hydroxyacid dehydrogenase family. PdxB subfamily. Homodimer.

It is found in the cytoplasm. The enzyme catalyses 4-phospho-D-erythronate + NAD(+) = (R)-3-hydroxy-2-oxo-4-phosphooxybutanoate + NADH + H(+). It functions in the pathway cofactor biosynthesis; pyridoxine 5'-phosphate biosynthesis; pyridoxine 5'-phosphate from D-erythrose 4-phosphate: step 2/5. In terms of biological role, catalyzes the oxidation of erythronate-4-phosphate to 3-hydroxy-2-oxo-4-phosphonooxybutanoate. In Escherichia fergusonii (strain ATCC 35469 / DSM 13698 / CCUG 18766 / IAM 14443 / JCM 21226 / LMG 7866 / NBRC 102419 / NCTC 12128 / CDC 0568-73), this protein is Erythronate-4-phosphate dehydrogenase.